The chain runs to 192 residues: 21.7 kDa class VI heat shock protein (192 aa).

The region spanning 80–192 is the sHSP domain; that stretch reads SLRSLGQCRV…IPKINSKNKF (113 aa).

This sequence belongs to the small heat shock protein (HSP20) family. As to quaternary structure, may form oligomeric structures.

The protein resides in the cytoplasm. The protein is 21.7 kDa class VI heat shock protein (HSP21.7) of Arabidopsis thaliana (Mouse-ear cress).